Consider the following 302-residue polypeptide: HTH-type transcriptional regulator ArgP (302 aa).

The HTH lysR-type domain occupies 4 to 60; that stretch reads PDYRTLQALDAVIRERGFERAAQKLCITQSAVSQRIKQLENLFGQPLLVRTVPPRPT. Residues 21-40 constitute a DNA-binding region (H-T-H motif); sequence FERAAQKLCITQSAVSQRIK.

It belongs to the LysR transcriptional regulatory family. Homodimer.

In terms of biological role, controls the transcription of genes involved in arginine and lysine metabolism. In Yersinia pseudotuberculosis serotype O:1b (strain IP 31758), this protein is HTH-type transcriptional regulator ArgP.